Consider the following 642-residue polypeptide: MSYQVLARKWRPQTFADVVGQEHVLTALANGLSLGRIHHAYLFSGTRGVGKTSIARLLAKGLNCETGITATPCGVCDNCREIEQGRFVDLIEIDAASRTKVEDTRDLLDNVQYAPARGRFKVYLIDEVHMLSRHSFNALLKTLEEPPAHVKFLLATTDPQKLPVTILSRCLQFHLKALDVEQIRHQLEHILNEEHIAHEPRALQLLSRAADGSLRDALSLTDQAIASGDGQVSTQAVSAMLGTLDDDQALSLVEAVVDANGERVMSLINEAAARGIEWEALLVEMLSLLHRIAMVQLSPAALGSDMAAIEQRMRELARTVPPGDLQLYYQTLLIGRKELPWAPDRRMGVEMTLLRALAFHPRMPLPEPETPRQSFAPVAPTAVMTPPQLQQPSAPAPQTSPAPLPASTSQVLAARNQLQRAQGVTKTKKSEPAAASRARPVNNSALERLASVSERVQARPAPSALETAPVKKEAYRWKATTPVVQTKEVVATPKALKKALEHEKTPELAAKLAAEAIERDPWAAQVSQLSLPKLVEQVALNAWKEQNGNAVCLHLRSTQRHLNSSGAQQKLAQALSDLTGTTVELTIVEDDNPAVRTPLEWRQAIYEEKLAQARESIIADNNIQTLRRFFDAELDEESIRPI.

45–52 (GTRGVGKT) provides a ligand contact to ATP. Residues Cys-64, Cys-73, Cys-76, and Cys-79 each coordinate Zn(2+). The segment at 385-441 (TPPQLQQPSAPAPQTSPAPLPASTSQVLAARNQLQRAQGVTKTKKSEPAAASRARPV) is disordered. A compositionally biased stretch (pro residues) spans 394–404 (APAPQTSPAPL). Polar residues predominate over residues 416-425 (NQLQRAQGVT).

The protein belongs to the DnaX/STICHEL family. As to quaternary structure, the DNA polymerase holoenzyme is a complex that contains 10 different types of subunits. These subunits are organized into 3 functionally essential subassemblies: the pol III core, the beta sliding clamp processivity factor and the clamp-loading complex. The pol III core (subunits alpha, epsilon and theta) contains the polymerase and the 3'-5' exonuclease proofreading activities. The polymerase is tethered to the template via the sliding clamp processivity factor. The clamp-loading complex assembles the beta processivity factor onto the primer template and plays a central role in the organization and communication at the replication fork. This complex contains delta, delta', psi and chi, and copies of either or both of two different DnaX proteins, gamma and tau. The composition of the holoenzyme is, therefore: (alpha,epsilon,theta)[2]-(isoform:gamma/tau)[3]-delta,delta', psi,chi-beta[4].

It catalyses the reaction DNA(n) + a 2'-deoxyribonucleoside 5'-triphosphate = DNA(n+1) + diphosphate. DNA polymerase III is a complex, multichain enzyme responsible for most of the replicative synthesis in bacteria. This DNA polymerase also exhibits 3' to 5' exonuclease activity. In terms of biological role, serves as a scaffold to help in the dimerization of the core complex. Its function is as follows. Seems to interact with the delta subunit to transfer the beta subunit on the DNA. The polypeptide is DNA polymerase III subunit tau (dnaX) (Salmonella typhimurium (strain LT2 / SGSC1412 / ATCC 700720)).